The chain runs to 510 residues: Arginine biosynthesis bifunctional protein ArgJ, mitochondrial (510 aa).

A compositionally biased stretch (polar residues) spans 57–70 (TSTNEPSAATTNVP). The tract at residues 57–76 (TSTNEPSAATTNVPHPQEAP) is disordered. 4 residues coordinate substrate: threonine 222, lysine 248, threonine 267, and glutamate 364. The Nucleophile role is filled by threonine 267.

Belongs to the ArgJ family. In terms of assembly, heterodimer of an alpha and a beta chain. Post-translationally, the alpha and beta chains are autoproteolytically processed from a single precursor protein within the mitochondrion.

It localises to the mitochondrion matrix. It catalyses the reaction N(2)-acetyl-L-ornithine + L-glutamate = N-acetyl-L-glutamate + L-ornithine. It carries out the reaction L-glutamate + acetyl-CoA = N-acetyl-L-glutamate + CoA + H(+). The protein operates within amino-acid biosynthesis; L-arginine biosynthesis; L-ornithine and N-acetyl-L-glutamate from L-glutamate and N(2)-acetyl-L-ornithine (cyclic): step 1/1. It functions in the pathway amino-acid biosynthesis; L-arginine biosynthesis; N(2)-acetyl-L-ornithine from L-glutamate: step 1/4. Functionally, catalyzes two activities which are involved in the cyclic version of arginine biosynthesis: the synthesis of acetylglutamate from glutamate and acetyl-CoA, and of ornithine by transacetylation between acetylornithine and glutamate. The chain is Arginine biosynthesis bifunctional protein ArgJ, mitochondrial from Malassezia globosa (strain ATCC MYA-4612 / CBS 7966) (Dandruff-associated fungus).